The chain runs to 483 residues: Proline--tRNA ligase (483 aa).

Belongs to the class-II aminoacyl-tRNA synthetase family. ProS type 3 subfamily. In terms of assembly, homodimer.

It is found in the cytoplasm. The enzyme catalyses tRNA(Pro) + L-proline + ATP = L-prolyl-tRNA(Pro) + AMP + diphosphate. Functionally, catalyzes the attachment of proline to tRNA(Pro) in a two-step reaction: proline is first activated by ATP to form Pro-AMP and then transferred to the acceptor end of tRNA(Pro). This is Proline--tRNA ligase from Mycoplasma genitalium (strain ATCC 33530 / DSM 19775 / NCTC 10195 / G37) (Mycoplasmoides genitalium).